The primary structure comprises 106 residues: Nucleoid-associated protein XCV1128 (106 aa).

Positions 81–106 are disordered; sequence IDAESKDRMGSATAGMQLPPGMKLPF.

The protein belongs to the YbaB/EbfC family. Homodimer.

The protein localises to the cytoplasm. The protein resides in the nucleoid. In terms of biological role, binds to DNA and alters its conformation. May be involved in regulation of gene expression, nucleoid organization and DNA protection. The protein is Nucleoid-associated protein XCV1128 of Xanthomonas euvesicatoria pv. vesicatoria (strain 85-10) (Xanthomonas campestris pv. vesicatoria).